The chain runs to 232 residues: Putative caffeoyl-CoA O-methyltransferase At1g67980 (232 aa).

K8 is a binding site for substrate. Residues V52, E74, 76-77, S82, and D100 contribute to the S-adenosyl-L-methionine site; that span reads GV. D149 serves as a coordination point for substrate. D149 is an a divalent metal cation binding site. Residue D151 coordinates S-adenosyl-L-methionine. Positions 175 and 176 each coordinate a divalent metal cation.

It belongs to the class I-like SAM-binding methyltransferase superfamily. Cation-dependent O-methyltransferase family. CCoAMT subfamily. The cofactor is a divalent metal cation.

The catalysed reaction is (E)-caffeoyl-CoA + S-adenosyl-L-methionine = (E)-feruloyl-CoA + S-adenosyl-L-homocysteine + H(+). It participates in aromatic compound metabolism; phenylpropanoid biosynthesis. Functionally, methylates caffeoyl-CoA to feruloyl-CoA and 5-hydroxyferuloyl-CoA to sinapoyl-CoA. Plays a role in the synthesis of feruloylated polysaccharides. Involved in the reinforcement of the plant cell wall. Also involved in the responding to wounding or pathogen challenge by the increased formation of cell wall-bound ferulic acid polymers. The chain is Putative caffeoyl-CoA O-methyltransferase At1g67980 from Arabidopsis thaliana (Mouse-ear cress).